Here is a 431-residue protein sequence, read N- to C-terminus: Ornithine decarboxylase (431 aa).

Residue lysine 94 is modified to N6-(pyridoxal phosphate)lysine. Residues serine 226, glycine 264, and 297–300 (EPGR) contribute to the pyridoxal 5'-phosphate site. 340–341 (YD) contributes to the substrate binding site. Cysteine 376 (proton donor; shared with dimeric partner) is an active-site residue. Substrate is bound at residue aspartate 377. Tyrosine 405 contributes to the pyridoxal 5'-phosphate binding site.

It belongs to the Orn/Lys/Arg decarboxylase class-II family. As to quaternary structure, homodimer. Only the dimer is catalytically active, as the active sites are constructed of residues from both monomers. The cofactor is pyridoxal 5'-phosphate.

The catalysed reaction is L-ornithine + H(+) = putrescine + CO2. It participates in amine and polyamine biosynthesis; putrescine biosynthesis via L-ornithine pathway; putrescine from L-ornithine: step 1/1. Inhibited by antizyme (AZ) in response to polyamine levels. AZ inhibits the assembly of the functional homodimer by binding to ODC monomers and targeting them for ubiquitin-independent proteolytic destruction by the 26S proteasome. Functionally, catalyzes the first and rate-limiting step of polyamine biosynthesis that converts ornithine into putrescine, which is the precursor for the polyamines, spermidine and spermine. Polyamines are essential for cell proliferation and are implicated in cellular processes, ranging from DNA replication to apoptosis. In Datura stramonium (Jimsonweed), this protein is Ornithine decarboxylase.